Consider the following 506-residue polypeptide: Adenylosuccinate synthetase (506 aa).

GTP contacts are provided by residues 35 to 41 (GDEGKGK) and 63 to 65 (GHT). The Proton acceptor role is filled by aspartate 36. Residues aspartate 36 and glycine 63 each contribute to the Mg(2+) site. Residues 36 to 39 (DEGK), 61 to 64 (NAGH), threonine 212, arginine 226, asparagine 304, threonine 319, and arginine 383 contribute to the IMP site. Residue histidine 64 is the Proton donor of the active site. Substrate is bound at residue 379–385 (VTTKRKR). GTP-binding positions include arginine 385, 411 to 413 (KLD), and 494 to 496 (GVG).

It belongs to the adenylosuccinate synthetase family. As to quaternary structure, homodimer. Requires Mg(2+) as cofactor.

It localises to the cytoplasm. It catalyses the reaction IMP + L-aspartate + GTP = N(6)-(1,2-dicarboxyethyl)-AMP + GDP + phosphate + 2 H(+). It participates in purine metabolism; AMP biosynthesis via de novo pathway; AMP from IMP: step 1/2. Functionally, plays an important role in the de novo pathway and in the salvage pathway of purine nucleotide biosynthesis. Catalyzes the first committed step in the biosynthesis of AMP from IMP. This is Adenylosuccinate synthetase from Drosophila yakuba (Fruit fly).